The primary structure comprises 387 residues: Patatin-13 (387 aa).

The signal sequence occupies residues 1 to 23 (MATTKSVLVLIFMILATTSSTFA). A PNPLA domain is found at 32–230 (LSVDGGGIKG…TVADPALLSV (199 aa)). The GXGXXG signature appears at 36-41 (GGGIKG). The GXSXG motif lies at 75-79 (GTSTG). The active-site Nucleophile is Ser-77. Asn-115 and Asn-203 each carry an N-linked (GlcNAc...) asparagine glycan. Catalysis depends on Asp-216, which acts as the Proton acceptor. The DGA/G signature appears at 216 to 218 (DGA). Residues 361–385 (ETYEEALKRFAKLLSDRKKLRANKA) are a coiled coil.

This sequence belongs to the patatin family. Tuber.

The protein localises to the vacuole. In terms of biological role, probable lipolytic acyl hydrolase (LAH), an activity which is thought to be involved in the response of tubers to pathogens. The sequence is that of Patatin-13 from Solanum tuberosum (Potato).